The sequence spans 173 residues: Crossover junction endodeoxyribonuclease RuvC (173 aa).

Residues aspartate 8, glutamate 67, and aspartate 139 contribute to the active site. Residues aspartate 8, glutamate 67, and aspartate 139 each coordinate Mg(2+).

Belongs to the RuvC family. In terms of assembly, homodimer which binds Holliday junction (HJ) DNA. The HJ becomes 2-fold symmetrical on binding to RuvC with unstacked arms; it has a different conformation from HJ DNA in complex with RuvA. In the full resolvosome a probable DNA-RuvA(4)-RuvB(12)-RuvC(2) complex forms which resolves the HJ. The cofactor is Mg(2+).

The protein localises to the cytoplasm. It catalyses the reaction Endonucleolytic cleavage at a junction such as a reciprocal single-stranded crossover between two homologous DNA duplexes (Holliday junction).. Functionally, the RuvA-RuvB-RuvC complex processes Holliday junction (HJ) DNA during genetic recombination and DNA repair. Endonuclease that resolves HJ intermediates. Cleaves cruciform DNA by making single-stranded nicks across the HJ at symmetrical positions within the homologous arms, yielding a 5'-phosphate and a 3'-hydroxyl group; requires a central core of homology in the junction. The consensus cleavage sequence is 5'-(A/T)TT(C/G)-3'. Cleavage occurs on the 3'-side of the TT dinucleotide at the point of strand exchange. HJ branch migration catalyzed by RuvA-RuvB allows RuvC to scan DNA until it finds its consensus sequence, where it cleaves and resolves the cruciform DNA. This chain is Crossover junction endodeoxyribonuclease RuvC, found in Klebsiella pneumoniae subsp. pneumoniae (strain ATCC 700721 / MGH 78578).